We begin with the raw amino-acid sequence, 206 residues long: ATP-dependent dethiobiotin synthetase BioD (206 aa).

12 to 17 (DSGKTL) provides a ligand contact to ATP. Thr16 contributes to the Mg(2+) binding site. Lys32 is a catalytic residue. Glu99 is a Mg(2+) binding site. Position 99 to 102 (99 to 102 (EGAG)) interacts with ATP.

The protein belongs to the dethiobiotin synthetase family. Homodimer. The cofactor is Mg(2+).

Its subcellular location is the cytoplasm. It catalyses the reaction (7R,8S)-7,8-diammoniononanoate + CO2 + ATP = (4R,5S)-dethiobiotin + ADP + phosphate + 3 H(+). It functions in the pathway cofactor biosynthesis; biotin biosynthesis; biotin from 7,8-diaminononanoate: step 1/2. Catalyzes a mechanistically unusual reaction, the ATP-dependent insertion of CO2 between the N7 and N8 nitrogen atoms of 7,8-diaminopelargonic acid (DAPA, also called 7,8-diammoniononanoate) to form a ureido ring. The polypeptide is ATP-dependent dethiobiotin synthetase BioD (Cytophaga hutchinsonii (strain ATCC 33406 / DSM 1761 / CIP 103989 / NBRC 15051 / NCIMB 9469 / D465)).